The primary structure comprises 60 residues: Large ribosomal subunit protein bL32 (60 aa).

A disordered region spans residues 1 to 28; the sequence is MAVQQNKKSRSKRDMRRSHDALTGPTLS. Basic residues predominate over residues 7–16; that stretch reads KKSRSKRDMR.

The protein belongs to the bacterial ribosomal protein bL32 family.

The chain is Large ribosomal subunit protein bL32 from Cellvibrio japonicus (strain Ueda107) (Pseudomonas fluorescens subsp. cellulosa).